A 196-amino-acid polypeptide reads, in one-letter code: dCTP deaminase, dUMP-forming (196 aa).

DCTP-binding positions include 101–106 (KSSLGR), D119, 127–129 (TLE), Q148, Y162, and Q174. Catalysis depends on E129, which acts as the Proton donor/acceptor.

This sequence belongs to the dCTP deaminase family. As to quaternary structure, homotrimer.

The enzyme catalyses dCTP + 2 H2O = dUMP + NH4(+) + diphosphate. Its pathway is pyrimidine metabolism; dUMP biosynthesis; dUMP from dCTP: step 1/1. Its function is as follows. Bifunctional enzyme that catalyzes both the deamination of dCTP to dUTP and the hydrolysis of dUTP to dUMP without releasing the toxic dUTP intermediate. This chain is dCTP deaminase, dUMP-forming, found in Thermobifida fusca (strain YX).